The sequence spans 338 residues: Serine/threonine-protein kinase YabT (338 aa).

The Protein kinase domain occupies 28-286 (YTLRKQLGKG…PIKASPQPAT (259 aa)). Residues 34–42 (LGKGANGIV) and K55 each bind ATP. D148 acts as the Proton acceptor in catalysis. Residues 266-312 (DAGQKAAQRKQPIKASPQPATRQRQQKPRQGKITKTRYTPKQKPAKS) are disordered. Basic residues predominate over residues 289-309 (RQQKPRQGKITKTRYTPKQKP).

It belongs to the protein kinase superfamily. Ser/Thr protein kinase family. In terms of processing, autophosphorylated.

It carries out the reaction L-seryl-[protein] + ATP = O-phospho-L-seryl-[protein] + ADP + H(+). The enzyme catalyses L-threonyl-[protein] + ATP = O-phospho-L-threonyl-[protein] + ADP + H(+). Plays a role in the cell's commitment to sporulation; phosphorylates DNA replication initiation-control protein YabA. Deletion of this kinase delays entry into sporulation but does not affect final spore yield. Overexpression decreases biofilm formation; phosphorylation of YabA probably prevents biofilm formation. This is Serine/threonine-protein kinase YabT (yabT) from Bacillus subtilis (strain 168).